Consider the following 187-residue polypeptide: Mast cell-expressed membrane protein 1 (187 aa).

At 1-85 (MEVEEIYKHQ…PCWLYRAILS (85 aa)) the chain is on the cytoplasmic side. The segment at 49-71 (DHAKGGHSRPTSQVPAQCRPPSD) is disordered. A helical; Signal-anchor for type II membrane protein transmembrane segment spans residues 86–106 (LYILLALAFVLCIILSAFIMV). Residues 107–187 (KNAEMSKELL…LQKMPQSSPQ (81 aa)) lie on the Extracellular side of the membrane. Asn-124 is a glycosylation site (N-linked (GlcNAc...) asparagine).

In terms of tissue distribution, expressed specifically in mast cells. Found primarily in lung.

It is found in the membrane. The polypeptide is Mast cell-expressed membrane protein 1 (Homo sapiens (Human)).